The following is a 218-amino-acid chain: 3-dehydroquinate dehydratase (218 aa).

3-dehydroquinate is bound by residues 29-31 (EFR) and Arg56. The Proton donor/acceptor role is filled by His116. Catalysis depends on Lys142, which acts as the Schiff-base intermediate with substrate. Residues Arg180, Ser200, and Gln204 each coordinate 3-dehydroquinate.

It belongs to the type-I 3-dehydroquinase family. In terms of assembly, homodimer.

It catalyses the reaction 3-dehydroquinate = 3-dehydroshikimate + H2O. It participates in metabolic intermediate biosynthesis; chorismate biosynthesis; chorismate from D-erythrose 4-phosphate and phosphoenolpyruvate: step 3/7. In terms of biological role, involved in the third step of the chorismate pathway, which leads to the biosynthesis of aromatic amino acids. Catalyzes the cis-dehydration of 3-dehydroquinate (DHQ) and introduces the first double bond of the aromatic ring to yield 3-dehydroshikimate. The sequence is that of 3-dehydroquinate dehydratase from Methanococcus maripaludis (strain DSM 14266 / JCM 13030 / NBRC 101832 / S2 / LL).